Reading from the N-terminus, the 421-residue chain is O-acetyl-L-homoserine sulfhydrylase 1 (421 aa).

Residue K206 is modified to N6-(pyridoxal phosphate)lysine.

This sequence belongs to the trans-sulfuration enzymes family. In terms of assembly, homotetramer. The cofactor is pyridoxal 5'-phosphate.

It carries out the reaction O-acetyl-L-homoserine + hydrogen sulfide = L-homocysteine + acetate. The protein operates within amino-acid biosynthesis; L-methionine biosynthesis via de novo pathway; L-homocysteine from O-acetyl-L-homoserine: step 1/1. With respect to regulation, inhibited by the carbonyl reagents hydroxylamine and phenylhydrazine. Also inhibited by methionine and propargylglycine. Its function is as follows. Catalyzes the conversion of O-acetyl-L-homoserine (OAH) into homocysteine in the methionine biosynthesis pathway. Has weak activity with O-acetyl-L-serine, O-phospho-L-serine, L-serine, O-succinyl-L-homoserine and L-homoserine. Shows low CTT beta-lyase activity and very low CTT gamma-synthase activity. This chain is O-acetyl-L-homoserine sulfhydrylase 1, found in Thermus thermophilus (strain ATCC 27634 / DSM 579 / HB8).